We begin with the raw amino-acid sequence, 478 residues long: Proline--tRNA ligase (478 aa).

Belongs to the class-II aminoacyl-tRNA synthetase family. ProS type 3 subfamily. Homodimer.

The protein resides in the cytoplasm. It catalyses the reaction tRNA(Pro) + L-proline + ATP = L-prolyl-tRNA(Pro) + AMP + diphosphate. Catalyzes the attachment of proline to tRNA(Pro) in a two-step reaction: proline is first activated by ATP to form Pro-AMP and then transferred to the acceptor end of tRNA(Pro). The sequence is that of Proline--tRNA ligase from Clostridium botulinum (strain Kyoto / Type A2).